We begin with the raw amino-acid sequence, 3305 residues long: Apolipophorins (3305 aa).

A signal peptide spans 1–23; it reads MGKSNRLLSVLFVISVLWKAAYG. One can recognise a Vitellogenin domain in the interval 39–640; it reads FAAGQKYNYG…SQTSFLPRSV (602 aa). N-linked (GlcNAc...) asparagine glycosylation is found at Asn643 and Asn2769. Positions 2733-2899 constitute a VWFD domain; it reads LRAVVVNGQH…NSYRLSRSCP (167 aa). Cys2757 and Cys2898 are disulfide-bonded.

Post-translationally, cleaved into 2 chains by furin protease. However, prevention of cleavage does not impair its function. N-glycosylated.

It localises to the secreted. Functionally, constitutes the major component of lipophorin, which mediates transport for various types of lipids in hemolymph. Acts by forming lipoprotein particles that bind lipoproteins and lipids. May be required for morphogens wingless (wg) and hedgehog (hh) function, possibly by acting as vehicles for the movement of wg and hh. The chain is Apolipophorins from Manduca sexta (Tobacco hawkmoth).